We begin with the raw amino-acid sequence, 155 residues long: Large ribosomal subunit protein uL22 (155 aa).

It belongs to the universal ribosomal protein uL22 family. In terms of assembly, part of the 50S ribosomal subunit. Contacts the macrolide antibiotic tylosin in the polypeptide exit tunnel.

In terms of biological role, this protein binds specifically to 23S rRNA. It makes multiple contacts with different domains of the 23S rRNA in the assembled 50S subunit and ribosome. Its function is as follows. Contacts all 6 domains of the 23S rRNA, helping stabilize their relative orientation. An extended beta-hairpin in the C-terminus forms part of the polypeptide exit tunnel, in which it helps forms a bend with protein L4, while most of the rest of the protein is located at the polypeptide exit tunnel on the outside of the subunit. The protein is Large ribosomal subunit protein uL22 of Haloarcula marismortui (strain ATCC 43049 / DSM 3752 / JCM 8966 / VKM B-1809) (Halobacterium marismortui).